The sequence spans 71 residues: Large ribosomal subunit protein eL38 (71 aa).

The protein belongs to the eukaryotic ribosomal protein eL38 family.

The polypeptide is Large ribosomal subunit protein eL38 (RpL38) (Argas monolakensis (Mono lake bird tick)).